The sequence spans 289 residues: ATP synthase subunit a (289 aa).

Transmembrane regions (helical) follow at residues 41–61 (KATALTIFAALFVGVIFWLGF), 101–121 (YLLVLFSFVLVSNVLAIIPAA), 129–149 (IAVPMVLAVVTWVMFIYAGIK), 166–186 (TAPLAIRLLLGPIEILSTLIV), 189–209 (FTLAIRLFANMFAGHLLLLVF), 222–242 (FVFGVASLLVAIVLTAFELVI), and 244–264 (ALQAYIITILTAAYIGGAMAH).

It belongs to the ATPase A chain family. F-type ATPases have 2 components, CF(1) - the catalytic core - and CF(0) - the membrane proton channel. CF(1) has five subunits: alpha(3), beta(3), gamma(1), delta(1), epsilon(1). CF(0) has three main subunits: a(1), b(2) and c(9-12). The alpha and beta chains form an alternating ring which encloses part of the gamma chain. CF(1) is attached to CF(0) by a central stalk formed by the gamma and epsilon chains, while a peripheral stalk is formed by the delta and b chains.

The protein resides in the cell membrane. In terms of biological role, key component of the proton channel; it plays a direct role in the translocation of protons across the membrane. In Frankia alni (strain DSM 45986 / CECT 9034 / ACN14a), this protein is ATP synthase subunit a.